A 436-amino-acid polypeptide reads, in one-letter code: 3-ketoacyl-CoA thiolase (436 aa).

Cysteine 99 (acyl-thioester intermediate) is an active-site residue. Residues histidine 392 and cysteine 422 each act as proton acceptor in the active site.

It belongs to the thiolase-like superfamily. Thiolase family. In terms of assembly, heterotetramer of two alpha chains (FadJ) and two beta chains (FadI).

It is found in the cytoplasm. The catalysed reaction is an acyl-CoA + acetyl-CoA = a 3-oxoacyl-CoA + CoA. It functions in the pathway lipid metabolism; fatty acid beta-oxidation. In terms of biological role, catalyzes the final step of fatty acid oxidation in which acetyl-CoA is released and the CoA ester of a fatty acid two carbons shorter is formed. The polypeptide is 3-ketoacyl-CoA thiolase (Shewanella woodyi (strain ATCC 51908 / MS32)).